We begin with the raw amino-acid sequence, 211 residues long: Arginine exporter protein ArgO (211 aa).

Transmembrane regions (helical) follow at residues 1 to 21 (MISY…PLGP), 37 to 57 (LMIA…GIFG), 68 to 88 (LLAL…FGAL), 111 to 131 (IIAT…DTFV), 147 to 167 (WFAL…ALLA), and 179 to 199 (AQRI…FQLA).

The protein belongs to the LysE/ArgO transporter (TC 2.A.75) family.

It localises to the cell inner membrane. It catalyses the reaction L-arginine(in) = L-arginine(out). Its function is as follows. Involved in the export of arginine. Important to control the intracellular level of arginine and the correct balance between arginine and lysine. The protein is Arginine exporter protein ArgO of Salmonella paratyphi B (strain ATCC BAA-1250 / SPB7).